A 112-amino-acid polypeptide reads, in one-letter code: Putative transposase YkgN (112 aa).

The protein belongs to the transposase 8 family.

The chain is Putative transposase YkgN (ykgN) from Escherichia coli (strain K12).